The sequence spans 195 residues: Sec-independent protein translocase protein TatB (195 aa).

Residues 1 to 21 (MFDIGFSELVLIFIVGLVVLG) form a helical membrane-spanning segment. Residues 166–195 (DESQFAAYYPPDDDLASPTPSQPQDKQNVS) are disordered. Polar residues predominate over residues 183–195 (PTPSQPQDKQNVS).

The protein belongs to the TatB family. The Tat system comprises two distinct complexes: a TatABC complex, containing multiple copies of TatA, TatB and TatC subunits, and a separate TatA complex, containing only TatA subunits. Substrates initially bind to the TatABC complex, which probably triggers association of the separate TatA complex to form the active translocon.

It localises to the cell inner membrane. Its function is as follows. Part of the twin-arginine translocation (Tat) system that transports large folded proteins containing a characteristic twin-arginine motif in their signal peptide across membranes. Together with TatC, TatB is part of a receptor directly interacting with Tat signal peptides. TatB may form an oligomeric binding site that transiently accommodates folded Tat precursor proteins before their translocation. The protein is Sec-independent protein translocase protein TatB of Actinobacillus pleuropneumoniae serotype 5b (strain L20).